The chain runs to 256 residues: MRLTLFAFVLAVCALASNATLAPRTDDVLAEQLYMSVVIGEYETAIAKCSEYLKEKKGEVIKEAVKRLIENGKRNTMDFAYQLWTKDGKEIVKSYFPIQFRVIFTEQTVKLINKRDHHALKLIDQQNHNKIAFGDSKDKTSKKVSWKFTPVLENNRVYFKIMSTEDKQYLKLDNTKGSSDDRIIYGDSTADTFKHHWYLEPSMYESDVMFFVYNREYNSVMTLDEDMAANEDREALGHSGEVSGYPQLFAWYIVPY.

An N-terminal signal peptide occupies residues 1–19 (MRLTLFAFVLAVCALASNA).

This sequence belongs to the 30 kDa lipoprotein family.

It localises to the secreted. This is Low molecular mass lipoprotein PBMHP-6 from Bombyx mori (Silk moth).